The following is a 350-amino-acid chain: Nicotinate-nucleotide--dimethylbenzimidazole phosphoribosyltransferase (350 aa).

Glutamate 317 (proton acceptor) is an active-site residue.

The protein belongs to the CobT family.

It catalyses the reaction 5,6-dimethylbenzimidazole + nicotinate beta-D-ribonucleotide = alpha-ribazole 5'-phosphate + nicotinate + H(+). Its pathway is nucleoside biosynthesis; alpha-ribazole biosynthesis; alpha-ribazole from 5,6-dimethylbenzimidazole: step 1/2. Functionally, catalyzes the synthesis of alpha-ribazole-5'-phosphate from nicotinate mononucleotide (NAMN) and 5,6-dimethylbenzimidazole (DMB). This Shewanella sp. (strain ANA-3) protein is Nicotinate-nucleotide--dimethylbenzimidazole phosphoribosyltransferase.